A 100-amino-acid polypeptide reads, in one-letter code: Protein Vpr (100 aa).

The interval 1–42 (MEQALENQGPAREPFNEWTLELLEELKEEAVRHFPRPWLQAC) is homooligomerization. Phosphoserine; by host occurs at positions 79, 98, and 100.

The protein belongs to the HIV-1 VPR protein family. Homooligomer, may form homodimer. Interacts with p6-gag region of the Pr55 Gag precursor protein through a (Leu-X-X)4 motif near the C-terminus of the P6gag protein. Interacts with host UNG. May interact with host RAD23A/HHR23A. Interacts with host VPRBP/DCAF1, leading to hijack the CUL4A-RBX1-DDB1-DCAF1/VPRBP complex, mediating ubiquitination of host proteins such as TERT and ZGPAT and arrest of the cell cycle in G2 phase. In terms of processing, phosphorylated on several residues by host. These phosphorylations regulate VPR activity for the nuclear import of the HIV-1 pre-integration complex.

It is found in the virion. It localises to the host nucleus. Its subcellular location is the host extracellular space. In terms of biological role, during virus replication, may deplete host UNG protein, and incude G2-M cell cycle arrest. Acts by targeting specific host proteins for degradation by the 26S proteasome, through association with the cellular CUL4A-DDB1 E3 ligase complex by direct interaction with host VPRPB/DCAF-1. Cell cycle arrest reportedly occurs within hours of infection and is not blocked by antiviral agents, suggesting that it is initiated by the VPR carried into the virion. Additionally, VPR induces apoptosis in a cell cycle dependent manner suggesting that these two effects are mechanistically linked. Detected in the serum and cerebrospinal fluid of AIDS patient, VPR may also induce cell death to bystander cells. Its function is as follows. During virus entry, plays a role in the transport of the viral pre-integration (PIC) complex to the host nucleus. This function is crucial for viral infection of non-dividing macrophages. May act directly at the nuclear pore complex, by binding nucleoporins phenylalanine-glycine (FG)-repeat regions. In Human immunodeficiency virus type 1 group O (isolate MVP5180) (HIV-1), this protein is Protein Vpr.